The chain runs to 1218 residues: Formin-A (1218 aa).

One can recognise a C2 domain in the interval 1 to 108; it reads MADKLYQIKL…ILGEACNYSV (108 aa). Residues 139–539 form the GBD/FH3 domain; it reads EEKKRHDEIQ…QISLRDKNIG (401 aa). Positions 563–638 form a coiled coil; the sequence is LKSQIESLKK…QLKLTQGTAK (76 aa). The interval 634–762 is disordered; the sequence is QGTAKPDSAA…KAAAPPRKEV (129 aa). Residues 649–747 show a composition bias toward pro residues; sequence APPPPPPPMT…FGKGPPPPPG (99 aa). Positions 652 to 737 constitute an FH1 domain; that stretch reads PPPPPMTGGG…AGGPPPPPPP (86 aa). The 397-residue stretch at 759–1155 folds into the FH2 domain; sequence RKEVPVPALK…IAKREAAKKL (397 aa). Positions 1034–1061 form a coiled coil; sequence SLSQVQAEVATLRKEFVQVQKSIETLNS. Disordered regions lie at residues 1153–1179 and 1198–1218; these read KKLK…TVEV and KNRR…PIDL. The region spanning 1174–1209 is the DAD domain; the sequence is GETVEVKESVVDDLLDTIASGDAFKNRRRRARKTDQ.

It belongs to the formin homology family. Diaphanous subfamily. In terms of assembly, interacts (via GBD/FH3 domain) with activated Rho-GTPases.

Functionally, formins play an important role in the nucleation of actin and the formation of linear actin filaments. The chain is Formin-A (forA) from Dictyostelium discoideum (Social amoeba).